The following is a 110-amino-acid chain: UPF0122 protein BCAH187_A3894 (110 aa).

Belongs to the UPF0122 family.

Might take part in the signal recognition particle (SRP) pathway. This is inferred from the conservation of its genetic proximity to ftsY/ffh. May be a regulatory protein. This Bacillus cereus (strain AH187) protein is UPF0122 protein BCAH187_A3894.